The sequence spans 199 residues: UPF0301 protein Rfer_1377 (199 aa).

The protein belongs to the UPF0301 (AlgH) family.

This Albidiferax ferrireducens (strain ATCC BAA-621 / DSM 15236 / T118) (Rhodoferax ferrireducens) protein is UPF0301 protein Rfer_1377.